The primary structure comprises 295 residues: Pyridoxal 5'-phosphate synthase subunit PdxS (295 aa).

Aspartate 25 is a binding site for D-ribose 5-phosphate. The active-site Schiff-base intermediate with D-ribose 5-phosphate is the lysine 82. Glycine 154 contributes to the D-ribose 5-phosphate binding site. Residue arginine 166 participates in D-glyceraldehyde 3-phosphate binding. D-ribose 5-phosphate contacts are provided by residues glycine 215 and 236-237 (GS).

It belongs to the PdxS/SNZ family. In the presence of PdxT, forms a dodecamer of heterodimers.

It carries out the reaction aldehydo-D-ribose 5-phosphate + D-glyceraldehyde 3-phosphate + L-glutamine = pyridoxal 5'-phosphate + L-glutamate + phosphate + 3 H2O + H(+). The protein operates within cofactor biosynthesis; pyridoxal 5'-phosphate biosynthesis. In terms of biological role, catalyzes the formation of pyridoxal 5'-phosphate from ribose 5-phosphate (RBP), glyceraldehyde 3-phosphate (G3P) and ammonia. The ammonia is provided by the PdxT subunit. Can also use ribulose 5-phosphate and dihydroxyacetone phosphate as substrates, resulting from enzyme-catalyzed isomerization of RBP and G3P, respectively. The polypeptide is Pyridoxal 5'-phosphate synthase subunit PdxS (Natranaerobius thermophilus (strain ATCC BAA-1301 / DSM 18059 / JW/NM-WN-LF)).